We begin with the raw amino-acid sequence, 244 residues long: Glucosamine-6-phosphate deaminase (244 aa).

Asp67 functions as the Proton acceptor; for enolization step in the catalytic mechanism. Residue Asn136 is the For ring-opening step of the active site. Residue His138 is the Proton acceptor; for ring-opening step of the active site. Glu143 acts as the For ring-opening step in catalysis.

It belongs to the glucosamine/galactosamine-6-phosphate isomerase family. NagB subfamily.

The enzyme catalyses alpha-D-glucosamine 6-phosphate + H2O = beta-D-fructose 6-phosphate + NH4(+). Its pathway is amino-sugar metabolism; N-acetylneuraminate degradation; D-fructose 6-phosphate from N-acetylneuraminate: step 5/5. In terms of biological role, catalyzes the reversible isomerization-deamination of glucosamine 6-phosphate (GlcN6P) to form fructose 6-phosphate (Fru6P) and ammonium ion. The sequence is that of Glucosamine-6-phosphate deaminase from Clostridium botulinum (strain ATCC 19397 / Type A).